We begin with the raw amino-acid sequence, 379 residues long: Queuine tRNA-ribosyltransferase (379 aa).

Residue Asp-94 is the Proton acceptor of the active site. Residues 94-98, Asp-148, Gln-191, and Gly-218 each bind substrate; that span reads DSGGF. Residues 249 to 255 are RNA binding; that stretch reads GVGSPDS. Residue Asp-268 is the Nucleophile of the active site. Residues 273 to 277 form an RNA binding; important for wobble base 34 recognition region; sequence TRIAR. Positions 306, 308, 311, and 337 each coordinate Zn(2+).

The protein belongs to the queuine tRNA-ribosyltransferase family. In terms of assembly, homodimer. Within each dimer, one monomer is responsible for RNA recognition and catalysis, while the other monomer binds to the replacement base PreQ1. It depends on Zn(2+) as a cofactor.

The enzyme catalyses 7-aminomethyl-7-carbaguanine + guanosine(34) in tRNA = 7-aminomethyl-7-carbaguanosine(34) in tRNA + guanine. The protein operates within tRNA modification; tRNA-queuosine biosynthesis. In terms of biological role, catalyzes the base-exchange of a guanine (G) residue with the queuine precursor 7-aminomethyl-7-deazaguanine (PreQ1) at position 34 (anticodon wobble position) in tRNAs with GU(N) anticodons (tRNA-Asp, -Asn, -His and -Tyr). Catalysis occurs through a double-displacement mechanism. The nucleophile active site attacks the C1' of nucleotide 34 to detach the guanine base from the RNA, forming a covalent enzyme-RNA intermediate. The proton acceptor active site deprotonates the incoming PreQ1, allowing a nucleophilic attack on the C1' of the ribose to form the product. After dissociation, two additional enzymatic reactions on the tRNA convert PreQ1 to queuine (Q), resulting in the hypermodified nucleoside queuosine (7-(((4,5-cis-dihydroxy-2-cyclopenten-1-yl)amino)methyl)-7-deazaguanosine). The chain is Queuine tRNA-ribosyltransferase from Listeria monocytogenes serotype 4a (strain HCC23).